The sequence spans 396 residues: 1-deoxy-D-xylulose 5-phosphate reductoisomerase (396 aa).

Residues Thr-15, Gly-16, Ile-18, and Asn-127 each contribute to the NADPH site. Lys-128 provides a ligand contact to 1-deoxy-D-xylulose 5-phosphate. Residue Glu-129 coordinates NADPH. Residue Asp-153 participates in Mn(2+) binding. 4 residues coordinate 1-deoxy-D-xylulose 5-phosphate: Ser-154, Glu-155, Ser-177, and His-200. Glu-155 is a Mn(2+) binding site. Gly-206 is a binding site for NADPH. 1-deoxy-D-xylulose 5-phosphate is bound by residues Ser-213, Asn-218, Lys-219, and Glu-222. A Mn(2+)-binding site is contributed by Glu-222.

This sequence belongs to the DXR family. The cofactor is Mg(2+). It depends on Mn(2+) as a cofactor.

It carries out the reaction 2-C-methyl-D-erythritol 4-phosphate + NADP(+) = 1-deoxy-D-xylulose 5-phosphate + NADPH + H(+). It participates in isoprenoid biosynthesis; isopentenyl diphosphate biosynthesis via DXP pathway; isopentenyl diphosphate from 1-deoxy-D-xylulose 5-phosphate: step 1/6. Functionally, catalyzes the NADPH-dependent rearrangement and reduction of 1-deoxy-D-xylulose-5-phosphate (DXP) to 2-C-methyl-D-erythritol 4-phosphate (MEP). This Anaplasma marginale (strain Florida) protein is 1-deoxy-D-xylulose 5-phosphate reductoisomerase.